Consider the following 523-residue polypeptide: Lysine--tRNA ligase (523 aa).

The 'HIGH' region motif lies at 30-38 (PSGYVHVGN). Zn(2+) is bound by residues aspartate 95, cysteine 99, histidine 100, histidine 106, cysteine 177, histidine 180, cysteine 199, and histidine 203. A 'KMSKS' region motif is present at residues 279–283 (KMSGS).

Belongs to the class-I aminoacyl-tRNA synthetase family. Requires Zn(2+) as cofactor.

The protein localises to the cytoplasm. It catalyses the reaction tRNA(Lys) + L-lysine + ATP = L-lysyl-tRNA(Lys) + AMP + diphosphate. The sequence is that of Lysine--tRNA ligase (lysS) from Pyrococcus horikoshii (strain ATCC 700860 / DSM 12428 / JCM 9974 / NBRC 100139 / OT-3).